Here is a 345-residue protein sequence, read N- to C-terminus: MRKNEMSTSKQAIQWKCLESKIESKRLHYGRFLVSPFKRGQASTVGIAMRRALLQEIEGTSITCARFCGVVHEYSTITGLQETIHDVLVNLKEIVLRGDSKEDIQEAFLSVTGPKEVTAGDLSLPPGVEAIDNSQYIATITQPISLTIELEIEKDCGYRIENLAKSGKGQFPIDAVFMPVRNVNYSIHLFGSGRATQEILFIEIWTNGSLTPHEALRKASEKLMDLLTTFLYVRGGDVSLFENGEDSLDLTKSPSLQPQFGDTNNLEERVLENRFIDQLELPARAFNCLKRAEIYTIADLLNYSREDLSKLKNFGRKSVDQVSEALWDRFAKELPDKKIVLNRRK.

Positions 1-234 (MRKNEMSTSK…DLLTTFLYVR (234 aa)) are alpha N-terminal domain (alpha-NTD). The interval 266–345 (LEERVLENRF…DKKIVLNRRK (80 aa)) is alpha C-terminal domain (alpha-CTD).

The protein belongs to the RNA polymerase alpha chain family. In terms of assembly, in plastids the minimal PEP RNA polymerase catalytic core is composed of four subunits: alpha, beta, beta', and beta''. When a (nuclear-encoded) sigma factor is associated with the core the holoenzyme is formed, which can initiate transcription.

Its subcellular location is the plastid. The protein resides in the chloroplast. It catalyses the reaction RNA(n) + a ribonucleoside 5'-triphosphate = RNA(n+1) + diphosphate. Its function is as follows. DNA-dependent RNA polymerase catalyzes the transcription of DNA into RNA using the four ribonucleoside triphosphates as substrates. The chain is DNA-directed RNA polymerase subunit alpha from Adiantum capillus-veneris (Maidenhair fern).